Here is an 842-residue protein sequence, read N- to C-terminus: MVAFTVDQMRSLMDKVTNVRNMSVIAHVDHGKSTLTDSLVQRAGIISAAKAGEARFTDTRKDEQERGITIKSTAISLYSEMSDEDVKEIKQKTDGNSFLINLIDSPGHVDFSSEVTAALRVTDGALVVVDTIEGVCVQTETVLRQALGERIKPVVVINKVDRALLELQVSKEDLYQTFARTVESVNVIVSTYADEVLGDVQVYPARGTVAFGSGLHGWAFTIRQFATRYAKKFGVDKAKMMDRLWGDSFFNPKTKKWTNKDTDAEGKPLERAFNMFILDPIFRLFTAIMNFKKDEIPVLLEKLEIVLKGDEKDLEGKALLKVVMRKFLPAADALLEMIVLHLPSPVTAQAYRAEQLYEGPADDANCIAIKNCDPKADLMLYVSKMVPTSDKGRFYAFGRVFAGTVKSGQKVRIQGPNYVPGKKDDLFIKAIQRVVLMMGRFVEPIDDCPAGNIIGLVGIDQFLLKTGTLTTSETAHNMKVMKFSVSPVVQVAVEVKNANDLPKLVEGLKRLSKSDPCVLTYMSESGEHIVAGTGELHLEICLQDLEHDHAGVPLKISPPVVAYRETVESESSQTALSKSPNKHNRIYLKAEPIDEEVSLAIENGIINPRDDFKARARIMADDYGWDVTDARKIWCFGPDGNGPNLVIDQTKAVQYLHEIKDSVVAAFQWATKEGPIFGEEMRSVRVNILDVTLHADAIHRGGGQIIPTMRRATYAGFLLADPKIQEPVFLVEIQCPEQAVGGIYSVLNKKRGQVVSEEQRPGTPLFTVKAYLPVNESFGFTGELRQATGGQAFPQMVFDHWSTLGSDPLDPTSKAGEIVLAARKRHGMKEEVPGWQEYYDKL.

The tr-type G domain occupies 17 to 346 (TNVRNMSVIA…MIVLHLPSPV (330 aa)). GTP is bound by residues 26 to 33 (AHVDHGKS), 158 to 161 (NKVD), and 213 to 215 (SGL). Position 509 is an N6,N6,N6-trimethyllysine; by EFM3; alternate (lysine 509). Position 509 is an N6,N6-dimethyllysine; by EFM3; alternate (lysine 509). Lysine 509 bears the N6-methyllysine; by EFM3; alternate mark. Serine 579 is modified (phosphoserine). The residue at position 613 (lysine 613) is an N6,N6-dimethyllysine; by EFM2; alternate. N6-methyllysine; by EFM2; alternate is present on lysine 613. Position 699 is a diphthamide (histidine 699). Phosphothreonine occurs at positions 713 and 763. A Glycyl lysine isopeptide (Lys-Gly) (interchain with G-Cter in ubiquitin) cross-link involves residue lysine 841.

The protein belongs to the TRAFAC class translation factor GTPase superfamily. Classic translation factor GTPase family. EF-G/EF-2 subfamily. Binds to 80S ribosomes. Actively translating ribosomes show mutually exclusive binding of eIF5a (HYP2 or ANB1) and EFT1/eEF2. Interacts with the 40S ribosomal subunit protein RPL9A; the interaction is direct. Interacts with the 60S ribosomal subunit proteins RPL12A; the interaction is direct. Interacts with RPS23A; the interaction is direct. Interacts with 18S rRNA; the interaction is direct. Interacts with 25S rRNA; the interaction is direct. Interacts with RPL0. Interacts with STM1; promoting ribosome inactivation. (Microbial infection) Diphthamide can be ADP-ribosylated by diphtheria toxin and by Pseudomonas exotoxin A, thus abolishing its function.

It is found in the cytoplasm. It catalyses the reaction GTP + H2O = GDP + phosphate + H(+). It functions in the pathway protein biosynthesis; polypeptide chain elongation. With respect to regulation, inhibited by fusidic acid and sordarin, which prevent the release of eEF2 from the ribosome after the translocation step. While fusidic acid acts on all eukaryotic eEF2, sordarin specifically binds and inhibits only selected fungal eEF2. Functionally, catalyzes the GTP-dependent ribosomal translocation step during translation elongation. During this step, the ribosome changes from the pre-translocational (PRE) to the post-translocational (POST) state as the newly formed A-site-bound peptidyl-tRNA and P-site-bound deacylated tRNA move to the P and E sites, respectively. Catalyzes the coordinated movement of the two tRNA molecules, the mRNA and conformational changes in the ribosome. This is Elongation factor 2 (EFT1) from Saccharomyces cerevisiae (strain ATCC 204508 / S288c) (Baker's yeast).